The primary structure comprises 88 residues: UPF0297 protein BcerKBAB4_4234 (88 aa).

The protein belongs to the UPF0297 family.

This chain is UPF0297 protein BcerKBAB4_4234, found in Bacillus mycoides (strain KBAB4) (Bacillus weihenstephanensis).